We begin with the raw amino-acid sequence, 269 residues long: Pyrroline-5-carboxylate reductase (269 aa).

This sequence belongs to the pyrroline-5-carboxylate reductase family.

It is found in the cytoplasm. The enzyme catalyses L-proline + NADP(+) = (S)-1-pyrroline-5-carboxylate + NADPH + 2 H(+). It carries out the reaction L-proline + NAD(+) = (S)-1-pyrroline-5-carboxylate + NADH + 2 H(+). Its pathway is amino-acid biosynthesis; L-proline biosynthesis; L-proline from L-glutamate 5-semialdehyde: step 1/1. Inhibited by p-chloromercuribenzoate. Its function is as follows. Catalyzes the reduction of 1-pyrroline-5-carboxylate (PCA) to L-proline. Does not catalyze the reverse reaction. In Escherichia coli (strain K12), this protein is Pyrroline-5-carboxylate reductase.